The sequence spans 265 residues: MLDLHQIIVSIIIGVIEGITEFLPISSTGHMIIASHWLKIDNENTKILEIFIEFGSALSILYFFHKKILRILKFNINVKKTNTKNLHIILAILPTIFFGLLFYKKIKLLFNTYNVMYALILGGIFLLISEIFKPKKYKTCSINDISLLQSAIIGFFQIFCLYPGFSRSGATIGTAILLGIKRSVAIEFSFIISIPLIMGASFYDFINNMHNFKILDLPIFFIGFMISFIVSILCIKKLLKIINRTSLIFFGIYRFIISGLIYFIN.

Helical transmembrane passes span 7–27 (IIVSIIIGVIEGITEFLPISS), 45–65 (TKILEIFIEFGSALSILYFFH), 86–106 (LHIILAILPTIFFGLLFYKKI), 108–128 (LLFNTYNVMYALILGGIFLLI), 145–165 (ISLLQSAIIGFFQIFCLYPGF), 186–206 (IEFSFIISIPLIMGASFYDFI), 214–234 (ILDLPIFFIGFMISFIVSILC), and 245–265 (TSLIFFGIYRFIISGLIYFIN).

This sequence belongs to the UppP family.

Its subcellular location is the cell membrane. It carries out the reaction di-trans,octa-cis-undecaprenyl diphosphate + H2O = di-trans,octa-cis-undecaprenyl phosphate + phosphate + H(+). Its function is as follows. Catalyzes the dephosphorylation of undecaprenyl diphosphate (UPP). Confers resistance to bacitracin. In Buchnera aphidicola subsp. Acyrthosiphon pisum (strain Tuc7), this protein is Undecaprenyl-diphosphatase.